Consider the following 135-residue polypeptide: Galectin-1 (135 aa).

Position 2 is an N-acetylalanine (alanine 2). In terms of domain architecture, Galectin spans 4-135 (GLVASNLNLK…DFKIKCVAFD (132 aa)). Lysine 13 and lysine 29 each carry N6-acetyllysine. Serine 30 is subject to Phosphoserine. A beta-D-galactoside is bound by residues 45-49 (HFNPR), histidine 53, asparagine 62, and 69-72 (WGTE). Lysine 108 bears the N6-acetyllysine; alternate mark. N6-succinyllysine; alternate is present on lysine 108. At lysine 128 the chain carries N6-acetyllysine.

Homodimer. Binds LGALS3BP. Interacts with CD2, CD3, CD4, CD6, CD7, CD43, ALCAM and CD45. Interacts with laminin (via poly-N-acetyllactosamine). Interacts with SUSD2.

Its subcellular location is the secreted. The protein localises to the extracellular space. It is found in the extracellular matrix. Its function is as follows. Lectin that binds beta-galactoside and a wide array of complex carbohydrates. Plays a role in regulating apoptosis, cell proliferation and cell differentiation. Inhibits CD45 protein phosphatase activity and therefore the dephosphorylation of Lyn kinase. Strong inducer of T-cell apoptosis. This Pongo abelii (Sumatran orangutan) protein is Galectin-1 (LGALS1).